Reading from the N-terminus, the 220-residue chain is Ribosomal RNA small subunit methyltransferase G (220 aa).

Residues G78, F83, 129–130 (GE), and R146 contribute to the S-adenosyl-L-methionine site.

It belongs to the methyltransferase superfamily. RNA methyltransferase RsmG family.

Its subcellular location is the cytoplasm. The catalysed reaction is guanosine(527) in 16S rRNA + S-adenosyl-L-methionine = N(7)-methylguanosine(527) in 16S rRNA + S-adenosyl-L-homocysteine. Its function is as follows. Specifically methylates the N7 position of guanine in position 527 of 16S rRNA. The sequence is that of Ribosomal RNA small subunit methyltransferase G from Geobacter metallireducens (strain ATCC 53774 / DSM 7210 / GS-15).